A 521-amino-acid polypeptide reads, in one-letter code: Cyclic AMP-responsive element-binding protein 3-like protein 2 (521 aa).

Residues 1 to 378 are Cytoplasmic-facing; it reads MEVLESGEQS…CKLAGTQTGT (378 aa). Residues 83–103 show a composition bias toward polar residues; that stretch reads YSLSEEPRTQSPFTHAATSDS. A disordered region spans residues 83-106; sequence YSLSEEPRTQSPFTHAATSDSFND. At S93 the chain carries Phosphoserine. Residue K178 forms a Glycyl lysine isopeptide (Lys-Gly) (interchain with G-Cter in SUMO2) linkage. S191 is subject to Phosphoserine. The disordered stretch occupies residues 196 to 264; that stretch reads SVDQLHLPPT…PHKLQGSGPL (69 aa). Positions 208-220 are enriched in low complexity; it reads SSHSSDSEGSLSP. One can recognise a bZIP domain in the interval 294-357; that stretch reads ALKKIRRKIK…RTLLQQLQKL (64 aa). Residues 296–325 are basic motif; sequence KKIRRKIKNKISAQESRRKKKEYMDSLEKK. The tract at residues 336–357 is leucine-zipper; that stretch reads LRKKVEVLENTNRTLLQQLQKL. Residues 379–399 traverse the membrane as a helical; Signal-anchor for type II membrane protein segment; that stretch reads CLMVVVLCFAVAFGSFFQGYG. Over 400–521 the chain is Lumenal; sequence PYPSATKMAL…ELERRVNATF (122 aa). Positions 427–430 match the S1P recognition motif; that stretch reads RNLL. N-linked (GlcNAc...) asparagine glycosylation is found at N481, N505, and N518.

The protein belongs to the bZIP family. ATF subfamily. Binds DNA as a dimer. Upon ER stress, translocated to the Golgi apparatus, where it is processed by regulated intramembrane proteolysis (RIP) to release the cytosol-facing N-terminal transcription factor domain. The cleavage is performed sequentially by site-1 and site-2 proteases (S1P/MBTPS1 and S2P/MBTPS2). Post-translationally, N-glycosylated. In terms of processing, ubiquitinated by HRD1/SYVN1; undergoes 'Lys-48'-linked ubiquitination, followed by rapid proteasomal degradation under normal conditions. Upon ER stress, SYVN1 E3 ubiquitin-protein ligase dissociates from its substrate, ubiquitination does not occur and CREB3L2 is stabilized. As to expression, widely expressed, including in lung, bladder, ovary, testis and spleen. Highly expressed in chondrocytes.

The protein localises to the endoplasmic reticulum membrane. It is found in the nucleus. In terms of biological role, transcription factor involved in unfolded protein response (UPR). In the absence of endoplasmic reticulum (ER) stress, inserted into ER membranes, with N-terminal DNA-binding and transcription activation domains oriented toward the cytosolic face of the membrane. In response to ER stress, transported to the Golgi, where it is cleaved in a site-specific manner by resident proteases S1P/MBTPS1 and S2P/MBTPS2. The released N-terminal cytosolic domain is translocated to the nucleus to effect transcription of specific target genes. Plays a critical role in chondrogenesis by activating the transcription of SEC23A, which promotes the transport and secretion of cartilage matrix proteins, and possibly that of ER biogenesis-related genes. In a neuroblastoma cell line, protects cells from ER stress-induced death. In vitro activates transcription of target genes via direct binding to the CRE site. The polypeptide is Cyclic AMP-responsive element-binding protein 3-like protein 2 (Creb3l2) (Mus musculus (Mouse)).